A 367-amino-acid chain; its full sequence is Innexin inx2 (367 aa).

At 1 to 22 (MFDVFGSVKGLLKIDQVCIDNN) the chain is on the cytoplasmic side. The helical transmembrane segment at 23–43 (VFRMHYKATVIILIAFSLLVT) threads the bilayer. Topologically, residues 44 to 109 (SRQYIGDPID…EDEVKYHKYY (66 aa)) are extracellular. Residues 110 to 130 (QWVCFVLFFQAILFYVPRYLW) form a helical membrane-spanning segment. Positions 130–179 (WKSWEGGRLKMLVMDLNSPIVNDECKNDRKKILVDYFIGNLNRHNFYAFR) are interaction with shg. Over 131 to 179 (KSWEGGRLKMLVMDLNSPIVNDECKNDRKKILVDYFIGNLNRHNFYAFR) the chain is Cytoplasmic. The helical transmembrane segment at 180 to 200 (FFVCEALNFVNVIGQIYFVDF) threads the bilayer. The Extracellular portion of the chain corresponds to 201–266 (FLDGEFSTYG…VLPLNIVNEK (66 aa)). A helical membrane pass occupies residues 267–287 (IYVFLWFWFIILSIMSGISLI). Over 288–367 (YRIAVVAGPK…HSAHKRPFDA (80 aa)) the chain is Cytoplasmic.

This sequence belongs to the pannexin family. Monomer and heterooligomer with ogre or Inx3 (via cytoplasmic C-terminal region). Interacts (via cytoplasmic loop) with shg (via cytoplasmic region). Interacts with arm. In terms of tissue distribution, in ovary, expressed in inner germarial sheath cells, prefollicular cells, follicle cells, nurse cells and oocytes. Expressed in embryonic epithelial cells. Expressed in foregut and hindgut from stage 11-17, segmentally repeated tracheal placodes at stage 14, salivary gland at stage 16 and proventriculus at stage 16-17 (at protein level). During germband extension stage (stage 7), expressed in epidermal epithelial cells. Expressed in cephalic furrow. Repeating epidermal pattern emerges at stage 11, refines to one or two cells at each side of the segment borders by stage 13. Expressed in the imaginal wing disk. In pupae, expressed in the CNS and in primary, secondary and tertiary pigment cells of the retina. Expressed in optic lamina of the adult CNS.

The protein resides in the cell membrane. It is found in the cell junction. The protein localises to the gap junction. Its subcellular location is the cytoplasm. It localises to the apical cell membrane. The protein resides in the apicolateral cell membrane. It is found in the basolateral cell membrane. The protein localises to the lateral cell membrane. Its function is as follows. Structural components of the gap junctions. Involved in gap junctional communication between germline and somatic cells which is essential for normal oogenesis. In embryonic epidermis, required for epithelial morphogenesis. Required for keyhole formation during early stages of proventriculus development in response to wg signaling. In follicle cells, promotes the formation of egg chambers in part through regulation of shg and baz at the boundary between germ cells and follicle cells. In inner germarial sheath cells, required for survival of early germ cells and for cyst formation. The polypeptide is Innexin inx2 (Inx2) (Drosophila melanogaster (Fruit fly)).